We begin with the raw amino-acid sequence, 843 residues long: Protein translocase subunit SecA (843 aa).

ATP-binding positions include glutamine 91, 109–113, and aspartate 498; that span reads GEGKT. The span at 796–825 shows a compositional bias: basic and acidic residues; it reads DFGKAEHVSAEDGKEKAKAEPYVKDEHIGR. The disordered stretch occupies residues 796-833; the sequence is DFGKAEHVSAEDGKEKAKAEPYVKDEHIGRNDPCPCGS. Zn(2+) contacts are provided by cysteine 829, cysteine 831, cysteine 840, and histidine 841.

It belongs to the SecA family. In terms of assembly, monomer and homodimer. Part of the essential Sec protein translocation apparatus which comprises SecA, SecYEG and auxiliary proteins SecDF. Other proteins may also be involved. Zn(2+) is required as a cofactor.

It localises to the cell membrane. It is found in the cytoplasm. It catalyses the reaction ATP + H2O + cellular proteinSide 1 = ADP + phosphate + cellular proteinSide 2.. Its function is as follows. Part of the Sec protein translocase complex. Interacts with the SecYEG preprotein conducting channel. Has a central role in coupling the hydrolysis of ATP to the transfer of proteins into and across the cell membrane, serving as an ATP-driven molecular motor driving the stepwise translocation of polypeptide chains across the membrane. The sequence is that of Protein translocase subunit SecA from Staphylococcus saprophyticus subsp. saprophyticus (strain ATCC 15305 / DSM 20229 / NCIMB 8711 / NCTC 7292 / S-41).